The following is a 234-amino-acid chain: Homeobox protein ceh-51 (234 aa).

2 disordered regions span residues 128–154 (PPSF…RTPF) and 209–234 (QIKQ…HVIS). The homeobox DNA-binding region spans 147–206 (RRGARTPFSDSQLYALRTRFEQCDTIKVDERRKLGAVIGLSPEQIKIWFQNRRFKLRKEK). Basic and acidic residues predominate over residues 220–234 (SAKEEAEEDQKHVIS).

The protein belongs to the NK-2 homeobox family.

It is found in the nucleus. Its function is as follows. Required for mesoderm development, including specification of muscle and coelomocyte precursors. The polypeptide is Homeobox protein ceh-51 (Caenorhabditis elegans).